The sequence spans 464 residues: 3-isopropylmalate dehydratase large subunit (464 aa).

Residues Cys-337, Cys-397, and Cys-400 each contribute to the [4Fe-4S] cluster site.

This sequence belongs to the aconitase/IPM isomerase family. LeuC type 1 subfamily. Heterodimer of LeuC and LeuD. The cofactor is [4Fe-4S] cluster.

The catalysed reaction is (2R,3S)-3-isopropylmalate = (2S)-2-isopropylmalate. It participates in amino-acid biosynthesis; L-leucine biosynthesis; L-leucine from 3-methyl-2-oxobutanoate: step 2/4. Functionally, catalyzes the isomerization between 2-isopropylmalate and 3-isopropylmalate, via the formation of 2-isopropylmaleate. This is 3-isopropylmalate dehydratase large subunit from Bacillus cereus (strain AH820).